Reading from the N-terminus, the 671-residue chain is MEPIEQQLTELRTTLRHHEYLYHVMDAPEIPDAEYDRLMRELRELEAQRPDLITPDSPTQRVGAAPLTAFNQIRHEVPMLSLDNVFDEESFLAFNKRVQDRLKSTENVIWCCELKLDGLAVSILYENGVLVSAATRGDGTTGEDITSNVRTIRAIPLKLHGDNIPARLEVRGEVFLPQAGFEKINEDARRTGGKVFANPRNAAAGSLRQLDPRITAKRPLTFFCYGVGILEGGELPDTHLGRLLQFKAWGLPVSDRVTLCDSPQAVLDFYHNVEKDRPTLGFDIDGVVIKVNSLALQEQLGFVARAPRWAVAFKFPAQEQMTFVRDVEFQVGRTGAITPVARLEPVQVAGVLVSNATLHNADEIERLGLRIGDKVVIRRAGDVIPQVVNVVLSERPEETRPIVFPTHCPVCGSDVERVEGEAVTRCTGGLICGAQRKESLKHFVSRRAMDVDGMGDKIIDQLVEREYVHTPADLFRLTAGKLTGLDRMGPKSAQNVVNALEKAKATTFARFLYALGIREVGEATAAGLAAYFGTLEALQAATIDELQKVPDVGIVVATHVFNFFAEESNRDVIGQLLAEGVHWPAPVVINVQEIDSPFAGKTVVLTGSLSQMSRDDAKARLVALGAKVAGSVSKKTDLVIAGEAAGSKLTKAQELGITVIDEAEMIRLLDA.

NAD(+) is bound by residues 32–36 (DAEYD), 81–82 (SL), and Glu-113. The N6-AMP-lysine intermediate role is filled by Lys-115. Residues Arg-136, Glu-173, Lys-290, and Lys-314 each coordinate NAD(+). Cys-408, Cys-411, Cys-426, and Cys-432 together coordinate Zn(2+). A BRCT domain is found at 593–671 (EIDSPFAGKT…EAEMIRLLDA (79 aa)).

Belongs to the NAD-dependent DNA ligase family. LigA subfamily. Mg(2+) is required as a cofactor. Mn(2+) serves as cofactor.

It carries out the reaction NAD(+) + (deoxyribonucleotide)n-3'-hydroxyl + 5'-phospho-(deoxyribonucleotide)m = (deoxyribonucleotide)n+m + AMP + beta-nicotinamide D-nucleotide.. DNA ligase that catalyzes the formation of phosphodiester linkages between 5'-phosphoryl and 3'-hydroxyl groups in double-stranded DNA using NAD as a coenzyme and as the energy source for the reaction. It is essential for DNA replication and repair of damaged DNA. In Salmonella schwarzengrund (strain CVM19633), this protein is DNA ligase.